A 238-amino-acid chain; its full sequence is MEHMFPEREIENLFVKWIKKHIRNGNLTLFEEFFKTDPWIVNRCDKNGSSVFMWICIYGRIDFLKFLFEQESYPGEIINPHRRDKDGNSALHYLAEKKNHLILEEVLGYFGKNGTKICLPNFNGMTPVMKAAIRGRTSNVLSLIKFGADPTQKDYHRGFTAWDWAVFTGNMELVKSLNHDYQKPLYMHFPLYKLDVFHRWFKKKPKIIITGCKNNVYEKLPEQNPNFLCVKKLNKYGK.

ANK repeat units lie at residues 48-77 (GSSV…PGEI), 86-115 (DGNS…KNGT), 123-152 (NGMT…DPTQ), and 157-187 (RGFT…PLYM). A Nuclear localization signal motif is present at residues 80 to 86 (PHRRDKD). Positions 202–213 (KKKPKIIITGCK) match the Nuclear localization signal motif. Residues 205–212 (PKIIITGC) carry the PxIxITxC motif; Interaction with host PPP3CA motif. Residues 227-230 (FLCV) carry the FLCV motif motif.

The protein belongs to the asfivirus A238L family. In terms of assembly, interacts with host PPIA. Interacts with host PPP3CA/Calcineurin. Interacts with host RELA/p65; interaction of the 32 kDa form with host RELA results in the formation of a stable complex with NF-kappa-B. Interacts with host PPP3R1. Interacts with host EP300; this interaction inhibits the association of host EP300 with host RELA, JUN and NFATC2. The protein exists in a 28 kDa and a 32 kDa form, probably due to post-translational modifications which are neither phosphorylation, nor sumoylation.

It localises to the host nucleus. It is found in the host cytoplasm. Functionally, I-kappa-B- (IkB)-like protein that inhibits the binding of NF-kappa-B to DNA, thereby down-regulating pro-inflammatory cytokine production. Forms a heterodimer with the NF-kappa-B subunit RELA/p65 and prevents the activation of the NF-kappa-B transcription factor. Also inhibits the host calcineurin phosphatase activity, which is required for the induction of nuclear factor of activated T cells(NFAT)-dependent immune response genes. Inhibits calcineurin function, which is required for the induction of nuclear factor of activated T cells (NFAT)-dependent immune response genes. Prevents the binding of substrates to calcineurin without affecting the phosphatase activity. Does not contain the serine residues that are phosphorylated by host IkB kinase and thus is not degraded following stimulation of the NFkB pathway. This chain is IkB-like protein (A238L), found in African swine fever virus (strain Badajoz 1971 Vero-adapted) (Ba71V).